The primary structure comprises 553 residues: Telomere repeat-binding protein 2 (553 aa).

The disordered stretch occupies residues 147–170 (SSTEVGACGNGSPNESRDDVNLFS). Residues 285–364 (VKLRIKSFRV…HLDSLGFSLE (80 aa)) form the Ubiquitin-like domain. Residues 394 to 413 (ALDSSHEPEPSPADSFGKLG) form a disordered region. One can recognise an HTH myb-type domain in the interval 448 to 507 (AQRRIRRPFSVTEVEALVQAVEKLGTGRWRDVKVRAFEDADHRTYVDLKDKWKTLVHTAR). Residues 476 to 503 (WRDVKVRAFEDADHRTYVDLKDKWKTLV) constitute a DNA-binding region (H-T-H motif).

As to quaternary structure, homodimer and heterodimer with TRP1. Interacts with SNL1. In terms of tissue distribution, expressed ubiquitously. Highest expression in flowers and leaves.

It localises to the nucleus. Functionally, binds specifically to the plant telomeric double-stranded DNA sequences. At least 2 repeats of telomeric sequences are required for binding. Induces DNA bending. This Arabidopsis thaliana (Mouse-ear cress) protein is Telomere repeat-binding protein 2 (TRP2).